We begin with the raw amino-acid sequence, 979 residues long: UPF0182 protein MRA_0066 (979 aa).

Helical transmembrane passes span 19-39 (LVTA…LVDI), 63-83 (LAIV…ALLL), 114-134 (LFGW…ASFD), 174-194 (WLFV…YLFG), 211-231 (VQLA…YWLD), 260-280 (KLVL…AIFL), and 288-308 (MAAA…PLLM). The disordered stretch occupies residues 898–948 (GTGRVATARGGDAASAPPPGAGGPAPPQAVPPPRTTQPPAAPPRGPDVPPA). The span at 913–946 (APPPGAGGPAPPQAVPPPRTTQPPAAPPRGPDVP) shows a compositional bias: pro residues.

This sequence belongs to the UPF0182 family.

The protein localises to the cell membrane. The chain is UPF0182 protein MRA_0066 from Mycobacterium tuberculosis (strain ATCC 25177 / H37Ra).